Here is a 102-residue protein sequence, read N- to C-terminus: Small ribosomal subunit protein uS10 (102 aa).

Belongs to the universal ribosomal protein uS10 family. Part of the 30S ribosomal subunit.

In terms of biological role, involved in the binding of tRNA to the ribosomes. The protein is Small ribosomal subunit protein uS10 of Thermococcus kodakarensis (strain ATCC BAA-918 / JCM 12380 / KOD1) (Pyrococcus kodakaraensis (strain KOD1)).